We begin with the raw amino-acid sequence, 175 residues long: MSYSKIPAGKDLPNDIYVAIEIPANHAPIKYEIDKDTDCLFVDRFMATPMFYPANYGFIPNTLADDGDPLDVLVVTPYPVAPGSVIRARPVGVLHMTDEAGGDAKLIAVPHDKLSVLYKDVKEYTDLPALLLEQIKHFFENYKDLEKGKWVKVEGWGNADAARAEITKAVAAFQK.

3 residues coordinate substrate: lysine 30, arginine 44, and tyrosine 56. The Mg(2+) site is built by aspartate 66, aspartate 71, and aspartate 103. Tyrosine 142 is a substrate binding site.

The protein belongs to the PPase family. In terms of assembly, homohexamer. It depends on Mg(2+) as a cofactor.

Its subcellular location is the cytoplasm. It catalyses the reaction diphosphate + H2O = 2 phosphate + H(+). In terms of biological role, catalyzes the hydrolysis of inorganic pyrophosphate (PPi) forming two phosphate ions. The polypeptide is Inorganic pyrophosphatase (Pseudomonas aeruginosa (strain ATCC 15692 / DSM 22644 / CIP 104116 / JCM 14847 / LMG 12228 / 1C / PRS 101 / PAO1)).